The chain runs to 450 residues: Serine/threonine-protein kinase-transforming protein Rmil (450 aa).

2 stretches are compositionally biased toward basic and acidic residues: residues Met-1–Val-14 and Gln-49–Ser-73. Residues Met-1 to Asp-80 are disordered. Residues Ile-83–Leu-343 form the Protein kinase domain. ATP-binding positions include Ile-89 to Val-97 and Lys-109. Residue Asp-202 is the Proton acceptor of the active site.

The protein belongs to the protein kinase superfamily. TKL Ser/Thr protein kinase family. RAF subfamily.

It carries out the reaction L-seryl-[protein] + ATP = O-phospho-L-seryl-[protein] + ADP + H(+). The enzyme catalyses L-threonyl-[protein] + ATP = O-phospho-L-threonyl-[protein] + ADP + H(+). The polypeptide is Serine/threonine-protein kinase-transforming protein Rmil (V-RMIL) (Avian rous-associated virus type 1).